We begin with the raw amino-acid sequence, 1639 residues long: Mediator of RNA polymerase II transcription subunit 14 (1639 aa).

The LXXLL motif 1 signature appears at 49–53 (LAELL). 2 disordered regions span residues 561–586 (GQSP…GSDS) and 709–755 (LPQP…KTVH). Positions 575 to 586 (SAAGGPAPGSDS) are enriched in low complexity. Over residues 711–721 (QPKPPQAPPTP) the composition is skewed to pro residues. The segment covering 722–748 (QQQQQQQQQQQQPGTSDAKSSGAGASA) has biased composition (low complexity). An LXXLL motif 2 motif is present at residues 768 to 772 (LKRLL). Disordered regions lie at residues 1039 to 1243 (RRSQ…HHYT) and 1558 to 1639 (MQPG…GGPN). Composition is skewed to gly residues over residues 1062-1088 (GNNG…GTGM) and 1122-1142 (IGGG…GQGG). Positions 1189–1201 (GPSSLSYMQSHTD) are enriched in polar residues. The segment covering 1219-1229 (PGMPRPSPRPG) has biased composition (pro residues). Gly residues predominate over residues 1558 to 1579 (MQPGGGPGVPGGPGGPMGGQIG). Residues 1589-1603 (VGSSPSPMMHSPMQQ) are compositionally biased toward low complexity. The span at 1604-1639 (MGGGGPQPGAYGGMVGGPGGGPQSGGPVGGGPGGPN) shows a compositional bias: gly residues.

This sequence belongs to the Mediator complex subunit 14 family. As to quaternary structure, component of the Mediator complex.

It localises to the nucleus. In terms of biological role, component of the Mediator complex, a coactivator involved in the regulated transcription of nearly all RNA polymerase II-dependent genes. Mediator functions as a bridge to convey information from gene-specific regulatory proteins to the basal RNA polymerase II transcription machinery. Mediator is recruited to promoters by direct interactions with regulatory proteins and serves as a scaffold for the assembly of a functional preinitiation complex with RNA polymerase II and the general transcription factors. This is Mediator of RNA polymerase II transcription subunit 14 (MED14) from Anopheles gambiae (African malaria mosquito).